The chain runs to 207 residues: MGRCSGRCTLVGICCLQLAAALQRQIFDFLGYQWAPILANFLHIMVVILGILGTLHYRSRYLILYSIWLALWVAWNAFIICFYLEVGHFSQHRDLIMNFNTSMHRSWWMENGPGCLVTPVRGPPLSLADHHMVTVTGCLLDYPYIEALSSALQIFLALFGFVYACYVSKVFMDEEDSFDFIGSYDSYGYQAPMKTSHLQLQPLYKPG.

The next 3 membrane-spanning stretches (helical) occupy residues 2 to 22, 35 to 55, and 62 to 82; these read GRCS…AAAL, APIL…LGTL, and LILY…IICF. A glycan (N-linked (GlcNAc...) asparagine) is linked at asparagine 100. Residues 147-167 traverse the membrane as a helical segment; that stretch reads ALSSALQIFLALFGFVYACYV.

The protein belongs to the NKAIN family. As to quaternary structure, interacts with atp1b1 C-terminus.

It is found in the cell membrane. The sequence is that of Sodium/potassium-transporting ATPase subunit beta-1-interacting protein 1 (nkain1) from Xenopus laevis (African clawed frog).